We begin with the raw amino-acid sequence, 896 residues long: Zinc finger protein 574 (896 aa).

C2H2-type zinc fingers lie at residues 16–38 (YVCS…QNSH) and 76–98 (YQCL…QELH). Position 113 is a phosphoserine (Ser113). Residues 126–148 (YECVDCKALFASQELWLNHRQTH) form a C2H2-type 3 zinc finger. A Phosphoserine modification is found at Ser164. Residues 214–236 (YKCSECSQLFQLPADFLEHQATH) form a C2H2-type 4 zinc finger. A disordered region spans residues 239–301 (APVPESQEPA…RARRNNSGEA (63 aa)). The segment covering 247–257 (PALQQEVQASS) has biased composition (polar residues). Positions 274–287 (HSYELRNGEAIGRD) are enriched in basic and acidic residues. Ser298 is subject to Phosphoserine. 4 C2H2-type zinc fingers span residues 309–331 (LFCS…LRSH), 336–358 (FKCP…LGDH), 364–386 (FLCV…RRAH), and 392–413 (HSCP…RRTH). Residues 434 to 460 (FPEPAPAETGEPEAPEPPVSEETSAGP) are disordered. The C2H2-type 9 zinc finger occupies 466–489 (YRCLLCSREFGKALQLTRHQRFVH). The segment at 495–517 (HKCSICGKMFKKKSHVRNHLRTH) adopts a C2H2-type 10; degenerate zinc-finger fold. 4 C2H2-type zinc fingers span residues 523-545 (FPCP…RLTH), 551-573 (YRCG…RLVH), 579-601 (YRCQ…RYHH), and 607-630 (YKCR…LVVH). Residues 636–659 (HRCPSCGAAFPSSLRLREHRCAAA) form a C2H2-type 15; degenerate zinc finger. A C2H2-type 16 zinc finger spans residues 667–689 (FECGTCGKKVGSAARLQAHEAAH). The tract at residues 687–733 (AAHAAAGPGEVLAKEPPAPRAPRATRAPVASPAALGSTATASPAAPA) is disordered. The span at 707–732 (APRATRAPVASPAALGSTATASPAAP) shows a compositional bias: low complexity. Ser717 bears the Phosphoserine mark. Thr724 carries the post-translational modification Phosphothreonine. Ser728 carries the post-translational modification Phosphoserine. 4 C2H2-type zinc fingers span residues 738-760 (LECS…RRIH), 766-788 (YPCP…RRLH), 794-816 (FACE…RRIH), and 822-844 (YSCP…RKTH). Asymmetric dimethylarginine is present on Arg832.

The protein belongs to the krueppel C2H2-type zinc-finger protein family.

The protein localises to the nucleus. Its function is as follows. May be involved in transcriptional regulation. This is Zinc finger protein 574 (ZNF574) from Homo sapiens (Human).